A 276-amino-acid polypeptide reads, in one-letter code: Ribosomal RNA small subunit methyltransferase A (276 aa).

Residues N19, L21, G46, E71, D94, and N117 each coordinate S-adenosyl-L-methionine.

This sequence belongs to the class I-like SAM-binding methyltransferase superfamily. rRNA adenine N(6)-methyltransferase family. RsmA subfamily.

It is found in the cytoplasm. The catalysed reaction is adenosine(1518)/adenosine(1519) in 16S rRNA + 4 S-adenosyl-L-methionine = N(6)-dimethyladenosine(1518)/N(6)-dimethyladenosine(1519) in 16S rRNA + 4 S-adenosyl-L-homocysteine + 4 H(+). Its function is as follows. Specifically dimethylates two adjacent adenosines (A1518 and A1519) in the loop of a conserved hairpin near the 3'-end of 16S rRNA in the 30S particle. May play a critical role in biogenesis of 30S subunits. The polypeptide is Ribosomal RNA small subunit methyltransferase A (Burkholderia ambifaria (strain ATCC BAA-244 / DSM 16087 / CCUG 44356 / LMG 19182 / AMMD) (Burkholderia cepacia (strain AMMD))).